The primary structure comprises 252 residues: Probable truncated L-gulonolactone oxidase 7, mitochondrial (252 aa).

A mitochondrion-targeting transit peptide spans 1-102 (MKRSMRSHLA…ELNYGVLVRY (102 aa)).

This sequence belongs to the oxygen-dependent FAD-linked oxidoreductase family.

Its subcellular location is the mitochondrion. The catalysed reaction is L-gulono-1,4-lactone + O2 = L-ascorbate + H2O2 + H(+). It participates in cofactor biosynthesis; L-ascorbate biosynthesis. May be involved in the biosynthesis of ascorbic acid. The protein is Probable truncated L-gulonolactone oxidase 7, mitochondrial of Arabidopsis thaliana (Mouse-ear cress).